Consider the following 101-residue polypeptide: Long chronological lifespan protein 1 (101 aa).

A signal peptide spans 1–17 (MKNAALCEALPLLATCS). Residue Ser-81 is the site of GPI-anchor amidated serine attachment. The propeptide at 82 to 101 (FAKPSFSFFFFLLTSLLSPF) is removed in mature form.

The protein resides in the cell membrane. The polypeptide is Long chronological lifespan protein 1 (LCL1) (Saccharomyces cerevisiae (strain ATCC 204508 / S288c) (Baker's yeast)).